A 208-amino-acid chain; its full sequence is Glycerol-3-phosphate acyltransferase (208 aa).

Helical transmembrane passes span Leu-4–Ile-24, Val-56–Leu-76, Pro-80–Phe-100, Pro-117–Phe-137, and Tyr-139–Lys-159.

It belongs to the PlsY family. In terms of assembly, probably interacts with PlsX.

The protein resides in the cell inner membrane. It catalyses the reaction an acyl phosphate + sn-glycerol 3-phosphate = a 1-acyl-sn-glycero-3-phosphate + phosphate. Its pathway is lipid metabolism; phospholipid metabolism. In terms of biological role, catalyzes the transfer of an acyl group from acyl-phosphate (acyl-PO(4)) to glycerol-3-phosphate (G3P) to form lysophosphatidic acid (LPA). This enzyme utilizes acyl-phosphate as fatty acyl donor, but not acyl-CoA or acyl-ACP. The sequence is that of Glycerol-3-phosphate acyltransferase from Vibrio cholerae serotype O1 (strain ATCC 39541 / Classical Ogawa 395 / O395).